A 684-amino-acid polypeptide reads, in one-letter code: Chaperone protein HtpG (684 aa).

Residues M1 to R329 form an a; substrate-binding region. Residues S330 to Q548 form a b region. Residues L549–L684 are c.

It belongs to the heat shock protein 90 family. As to quaternary structure, homodimer.

The protein localises to the cytoplasm. Molecular chaperone. Has ATPase activity. The sequence is that of Chaperone protein HtpG from Porphyromonas gingivalis (strain ATCC BAA-308 / W83).